The primary structure comprises 218 residues: ER lumen protein-retaining receptor (218 aa).

Topologically, residues 1 to 2 are lumenal; that stretch reads MN. Residues 3–23 traverse the membrane as a helical segment; that stretch reads LFSFLGDMLHLGSMLILLFKI. Residues 24 to 57 lie on the Cytoplasmic side of the membrane; the sequence is KNDKSCAGVSLKSQILFTIVFTARYLDLFTNYVS. Residues 58-78 form a helical membrane-spanning segment; the sequence is LYITFMKITYIAVSYYTLHLI. The Lumenal segment spans residues 79–94; the sequence is ARKYKFTYDKDHDTFK. A helical transmembrane segment spans residues 95–115; it reads IVYLIASCAILSLITYDKTTI. At 116–123 the chain is on the cytoplasmic side; it reads GIYSTFLE. The helical transmembrane segment at 124–144 threads the bilayer; that stretch reads ILWTFSIYLESIAILPQLILL. The Lumenal segment spans residues 145–152; it reads QRTGEVEA. Residues 153–173 traverse the membrane as a helical segment; that stretch reads LTSNYIVLLGGYRAFYLFNWI. Topologically, residues 174 to 184 are cytoplasmic; it reads YRITFYNWSGK. A helical transmembrane segment spans residues 185–205; that stretch reads IEMLSGLLQTILYADFFYYYA. The Lumenal portion of the chain corresponds to 206–218; it reads KSRMYGKKLVLPQ.

Belongs to the ERD2 family.

The protein resides in the endoplasmic reticulum membrane. Required for the retention of luminal endoplasmic reticulum proteins. Determines the specificity of the luminal ER protein retention system. Also required for normal vesicular traffic through the Golgi. This Dictyostelium discoideum (Social amoeba) protein is ER lumen protein-retaining receptor (kdelr).